A 444-amino-acid polypeptide reads, in one-letter code: CCA-adding enzyme (444 aa).

Positions 57 and 60 each coordinate ATP. Ser-57 and Arg-60 together coordinate CTP. The Mg(2+) site is built by Asp-69, Asp-71, and Asp-124. Residues His-147, Lys-168, and Tyr-177 each contribute to the ATP site. CTP-binding residues include His-147, Lys-168, and Tyr-177.

The protein belongs to the tRNA nucleotidyltransferase/poly(A) polymerase family. Archaeal CCA-adding enzyme subfamily. In terms of assembly, homodimer. Mg(2+) serves as cofactor.

It carries out the reaction a tRNA precursor + 2 CTP + ATP = a tRNA with a 3' CCA end + 3 diphosphate. It catalyses the reaction a tRNA with a 3' CCA end + 2 CTP + ATP = a tRNA with a 3' CCACCA end + 3 diphosphate. In terms of biological role, catalyzes the addition and repair of the essential 3'-terminal CCA sequence in tRNAs without using a nucleic acid template. Adds these three nucleotides in the order of C, C, and A to the tRNA nucleotide-73, using CTP and ATP as substrates and producing inorganic pyrophosphate. tRNA 3'-terminal CCA addition is required both for tRNA processing and repair. Also involved in tRNA surveillance by mediating tandem CCA addition to generate a CCACCA at the 3' terminus of unstable tRNAs. While stable tRNAs receive only 3'-terminal CCA, unstable tRNAs are marked with CCACCA and rapidly degraded. The polypeptide is CCA-adding enzyme (Methanococcus maripaludis (strain C5 / ATCC BAA-1333)).